Consider the following 405-residue polypeptide: Neisseria adhesin A (405 aa).

A signal peptide spans 1-23; it reads MKHFPSKVLTTAILATFCSGALA. A head domain region spans residues 24-87; sequence ATNDDDVKKA…ADDFKGLGLK (64 aa). 2 coiled-coil regions span residues 87-170 and 181-329; these read KKVV…KLEA and AFND…LRKE. The interval 88–350 is coiled stalk domain; it reads KVVTNLTKTV…SGLFQPYNVG (263 aa). The tract at residues 312–350 is outer membrane translocation of the passenger domain; the sequence is HDTRLNGLDKTVSDLRKETRQGLAEQAALSGLFQPYNVG. The next 4 membrane-spanning stretches (beta stranded) occupy residues 350–360, 364–375, 382–388, and 394–405; these read GRFNVTAAVGG, ESAVAIGTGFRF, KAGVAVG, and SAAYHVGVNYEW. The segment at 351-405 is translocator domain; the sequence is RFNVTAAVGGYKSESAVAIGTGFRFTENFAAKAGVAVGTSSGSSAAYHVGVNYEW.

The protein belongs to the autotransporter-2 (AT-2) (TC 1.B.40) family. As to quaternary structure, the non-membrane anchored protein (residues 24-350) probably forms a homotrimer; it is assumed the mature protein forms trimers in situ. The mature protein without the membrane-targeting segment (residues 24-350) binds to human heat shock 90 beta protein (HSP90AB1) both in vitro and when incubated with human monocytes. A subsequent paper showed binding of the same fragment in epithelial cells to both HSP90AA1 and HSP90AB1; in vitro the interaction is stabilized by ADP and the Hsp90 inhibitor 17-AAG (17-N-allylamino-17-demethoxygeldanamycin), in vitro and in vivo both interactions are inhibited by ATP. Binds human oxidized low-density lipoprotein receptor 1 (LOX-1, OLR1) in protein microarrays, in solution and when LOX-1 is expressed on the cell surface. Binds via the head and the beginning of the coiled stalk (residues 24-170); binding can be abrogated by monoclonal antibodies against those specific regions of NadA. Other potential binding partners were identified but not characterized in the same study. Forms high molecular weight oligomers in whole cell extracts that are not disrupted by boiling in SDS buffer.

The protein localises to the cell outer membrane. It is found in the cell surface. Adheres to and induces bacterial uptake by human epithelial cells in a microfilament-dependent process. Binding is reduced by pronase treatment, suggesting there is a protein receptor on the human cells. Possible human protein receptors include integrin beta-1 (ITGB1) and oxidized low-density lipoprotein receptor 1 (OLR1). Binds to extracellular human Hsp90 (preferentially the beta isoform, HSP90AB1) on monocytes, binding stimulates monocytes in a TLR4-dependent fashion, polymixin B, which binds NadA, blocks the activation. Hsp90 is probably not the first receptor on human monocytes. Non-membrane anchored protein (residues 24-350) is internalized into human epithelial cells by hijacking the endosome recycling pathway and may be recycled back to the cell surface, which might aid transcellular trafficking of the bacteria. A bacterial cell surface protein; antisera against this protein induce complement-mediated killing of this and other strains. This is Neisseria adhesin A from Neisseria meningitidis serogroup B.